Here is a 198-residue protein sequence, read N- to C-terminus: Glycerol-3-phosphate acyltransferase (198 aa).

The next 6 helical transmembrane spans lie at Y5–I25, V55–F75, G79–L99, V114–V134, Y139–I159, and Y164–I184.

This sequence belongs to the PlsY family. In terms of assembly, probably interacts with PlsX.

Its subcellular location is the cell membrane. It catalyses the reaction an acyl phosphate + sn-glycerol 3-phosphate = a 1-acyl-sn-glycero-3-phosphate + phosphate. The protein operates within lipid metabolism; phospholipid metabolism. Catalyzes the transfer of an acyl group from acyl-phosphate (acyl-PO(4)) to glycerol-3-phosphate (G3P) to form lysophosphatidic acid (LPA). This enzyme utilizes acyl-phosphate as fatty acyl donor, but not acyl-CoA or acyl-ACP. The polypeptide is Glycerol-3-phosphate acyltransferase (Finegoldia magna (strain ATCC 29328 / DSM 20472 / WAL 2508) (Peptostreptococcus magnus)).